Consider the following 585-residue polypeptide: ATP-dependent lipid A-core flippase (585 aa).

5 helical membrane passes run 24–44 (LWKV…ASAA), 65–85 (LLVP…SFCG), 143–163 (ITVV…MIYV), 165–185 (WKLT…IGYV), and 253–273 (PIIQ…ALSP). The region spanning 29–310 (ALAVLGNVIY…LTEVNAVIQR (282 aa)) is the ABC transmembrane type-1 domain. The region spanning 342 to 578 (LEFKSLGFAY…DGAYAALHKL (237 aa)) is the ABC transporter domain. Residue 376-383 (GRSGSGKS) participates in ATP binding.

This sequence belongs to the ABC transporter superfamily. Lipid exporter (TC 3.A.1.106) family. As to quaternary structure, homodimer.

The protein resides in the cell inner membrane. It carries out the reaction ATP + H2O + lipid A-core oligosaccharideSide 1 = ADP + phosphate + lipid A-core oligosaccharideSide 2.. Functionally, involved in lipopolysaccharide (LPS) biosynthesis. Translocates lipid A-core from the inner to the outer leaflet of the inner membrane. Transmembrane domains (TMD) form a pore in the inner membrane and the ATP-binding domain (NBD) is responsible for energy generation. This Hahella chejuensis (strain KCTC 2396) protein is ATP-dependent lipid A-core flippase.